Consider the following 471-residue polypeptide: Histone deacetylase 6 (471 aa).

An N-acetylmethionine modification is found at Met-1. The interval 20–333 (RVSYFYEPTI…WCYETAVAVG (314 aa)) is histone deacetylase. Residue His-153 is the Proton donor/acceptor of the active site. 3 residues coordinate Zn(2+): Asp-188, His-190, and Asp-276. A disordered region spans residues 389 to 471 (PSVQFQHTPP…PEPDVNPPSS (83 aa)). The span at 453 to 463 (GEDEMDDDNPE) shows a compositional bias: acidic residues.

It belongs to the histone deacetylase family. HD type 1 subfamily. Interacts with Coi1, which functions in an SCF complex that recruits regulators for ubiquitination. Interacts with AHL22. Interacts with AS1. Part of the AS1 repressor complex composed of AS1, LBD6/AS2 and HDA6. Binds to EBS and SHL. Interacts with MBD6. Interacts with HDA5. Interacts with FLD. Requires Zn(2+) as cofactor. Not detected in leaves, stems, flowers and young siliques.

It is found in the nucleus. It localises to the nucleolus. The enzyme catalyses N(6)-acetyl-L-lysyl-[histone] + H2O = L-lysyl-[histone] + acetate. Its activity is regulated as follows. Inhibited by trichostatin A. Functionally, responsible for the deacetylation of lysine residues on the N-terminal part of the core histones (H2A, H2B, H3 and H4). Might remove acetyl residues only from specific targets, such as rDNA repeats or complex transgenes. Histone deacetylation gives a tag for epigenetic repression and plays an important role in transcriptional regulation, cell cycle progression and developmental events. Histone deacetylases act via the formation of large multiprotein complexes. Required for rRNA gene silencing in nucleolar dominance. Plays a role in transgene silencing, but this effect seems to bee independent of the histone deacetylase activity. Part of the AS1 repressor complex to regulate the KNOX expression in leaf development. Binds to KNAT1, KNAT2, and KNATM chromatin. Involved in the regulation of flowering time. Forms a histone deacetylase complex with HDA5, FLD and MSI4/FVE that represses FLC gene expression to control flowering time. The polypeptide is Histone deacetylase 6 (Arabidopsis thaliana (Mouse-ear cress)).